The following is a 123-amino-acid chain: Small ribosomal subunit protein bS16 (123 aa).

Residues 87-123 (AKNNPIKAKPGKRAQERAAEKAQKAADAAAAAADAAE) form a disordered region. The span at 99-110 (RAQERAAEKAQK) shows a compositional bias: basic and acidic residues. Low complexity predominate over residues 111-123 (AADAAAAAADAAE).

Belongs to the bacterial ribosomal protein bS16 family.

The chain is Small ribosomal subunit protein bS16 from Rhizobium etli (strain CIAT 652).